The chain runs to 1624 residues: ATP-binding cassette sub-family A member 6 (1624 aa).

A helical transmembrane segment spans residues 31–51; it reads LLEWSIPIIIGLHMGLFSYLA. Residues Asn84 and Asn91 are each glycosylated (N-linked (GlcNAc...) asparagine). 6 helical membrane passes run 222–242, 267–287, 297–317, 326–346, 356–376, and 395–415; these read IFIL…SSNV, WGLI…IIIT, FLVI…VTFL, VLTN…GFTV, EWVL…KVIF, and VMIA…VLAL. Residues 478-713 enclose the ABC transporter 1 domain; sequence IRIRNIKKEY…WGLGYHLSLF (236 aa). Residue 514–521 coordinates ATP; it reads GHSGAGKS. Asn576 carries N-linked (GlcNAc...) asparagine glycosylation. 8 helical membrane-spanning segments follow: residues 854–874, 971–991, 1005–1025, 1058–1078, 1094–1114, 1130–1150, 1154–1174, and 1194–1214; these read AFLI…IEYV, LHCF…MLNH, FIVL…CVIC, WCGQ…TSYF, IVFS…FLTY, WSIC…NGPF, LVIS…LVVL, and AVDL…IFVL. The 239-residue stretch at 1282–1520 folds into the ABC transporter 2 domain; that stretch reads LHKEYAGQKK…FGQDYVLELR (239 aa). Residue 1320–1327 participates in ATP binding; the sequence is GPDGAGKS.

The protein belongs to the ABC transporter superfamily. ABCA family. As to expression, widely expressed with higher expression in heart, lung, brain, spleen and testis.

The protein resides in the golgi apparatus membrane. Probable transporter which may play a role in macrophage lipid transport and homeostasis. The polypeptide is ATP-binding cassette sub-family A member 6 (Abca6) (Mus musculus (Mouse)).